We begin with the raw amino-acid sequence, 553 residues long: Peroxiredoxin-2A (553 aa).

Residues 4–160 form the Thioredoxin domain; that stretch reads IDVGDFVPDG…LMKMTTTTMS (157 aa). Residue C51 is the Cysteine sulfenic acid (-SOH) intermediate of the active site. The F-box domain occupies 156–201; sequence TTTMSNLPTDLLEEIISRVPRKYMRAVRLTCKRWNGMFKSQSFTKM.

It belongs to the peroxiredoxin family. Prx5 subfamily. Monomer.

It carries out the reaction [glutaredoxin]-dithiol + a hydroperoxide = [glutaredoxin]-disulfide + an alcohol + H2O. Thiol-specific peroxidase that catalyzes the reduction of hydrogen peroxide and organic hydroperoxides to water and alcohols, respectively. Plays a role in cell protection against oxidative stress by detoxifying peroxides. May be involved in intracellular redox signaling. This Arabidopsis thaliana (Mouse-ear cress) protein is Peroxiredoxin-2A (PRXIIA).